Consider the following 239-residue polypeptide: 1-(5-phosphoribosyl)-5-[(5-phosphoribosylamino)methylideneamino] imidazole-4-carboxamide isomerase (239 aa).

Asp-8 functions as the Proton acceptor in the catalytic mechanism. Residue Asp-129 is the Proton donor of the active site.

The protein belongs to the HisA/HisF family.

The protein localises to the cytoplasm. It catalyses the reaction 1-(5-phospho-beta-D-ribosyl)-5-[(5-phospho-beta-D-ribosylamino)methylideneamino]imidazole-4-carboxamide = 5-[(5-phospho-1-deoxy-D-ribulos-1-ylimino)methylamino]-1-(5-phospho-beta-D-ribosyl)imidazole-4-carboxamide. It functions in the pathway amino-acid biosynthesis; L-histidine biosynthesis; L-histidine from 5-phospho-alpha-D-ribose 1-diphosphate: step 4/9. The chain is 1-(5-phosphoribosyl)-5-[(5-phosphoribosylamino)methylideneamino] imidazole-4-carboxamide isomerase from Bacillus cereus (strain AH187).